The primary structure comprises 477 residues: Tripartite motif-containing protein 72 (477 aa).

Leu14, Gln17, Pro29, Cys31, Thr34, Gln37, Thr53, Pro56, Gly86, Leu89, Val97, Glu100, Leu105, Gly108, Gly114, and Lys117 together coordinate Zn(2+). Residues Cys16–Gln59 form an RING-type zinc finger. The B box-type zinc finger occupies Val83 to Ala124. A coiled-coil region spans residues Leu135–Glu232. The region spanning Asp272–Gln476 is the B30.2/SPRY domain.

This sequence belongs to the TRIM/RBCC family. As to quaternary structure, homodimer. Homooligomer; disulfide-linked. Oligomerizes on the phospholipid membrane. Post-translationally, disulfide bond formation at Cys-244 occurs in case of membrane damage that cause the entry of the oxidized milieu of the extracellular space, resulting in homooligomerization.

The protein localises to the cell membrane. It is found in the sarcolemma. It localises to the cytoplasmic vesicle membrane. It catalyses the reaction S-ubiquitinyl-[E2 ubiquitin-conjugating enzyme]-L-cysteine + [acceptor protein]-L-lysine = [E2 ubiquitin-conjugating enzyme]-L-cysteine + N(6)-ubiquitinyl-[acceptor protein]-L-lysine.. The protein operates within protein modification; protein ubiquitination. Its activity is regulated as follows. Specifically binds phosphatidylserine. The binding to phospholipids enhances ubiquitination activity. Muscle-specific E3 ubiquitin-protein ligase that plays a central role in cell membrane repair by nucleating the assembly of the repair machinery at injury sites. Acts as a sensor of oxidation: upon membrane damage, entry of extracellular oxidative environment results in disulfide bond formation and homooligomerization at the injury site. This oligomerization acts as a nucleation site for recruitment of TRIM72-containing vesicles to the injury site, leading to membrane patch formation. Probably acts upstream of the Ca(2+)-dependent membrane resealing process. Required for transport of DYSF to sites of cell injury during repair patch formation. Regulates membrane budding and exocytosis. May be involved in the regulation of the mobility of KCNB1-containing endocytic vesicles. The protein is Tripartite motif-containing protein 72 (trim72) of Xenopus laevis (African clawed frog).